Reading from the N-terminus, the 534-residue chain is Replication factor C large subunit (534 aa).

45–52 (GPPGIGKT) lines the ATP pocket. Residues 444-463 (KNKKEIKVKTKKDTVEDSSK) show a composition bias toward basic and acidic residues. Positions 444-534 (KNKKEIKVKT…KSRQTTLFDF (91 aa)) are disordered. Low complexity predominate over residues 488–510 (SSNSTTKNKTESPKNSSKTSSKT). A compositionally biased stretch (basic residues) spans 517-527 (TSKKNNKKKSR).

Belongs to the activator 1 small subunits family. RfcL subfamily. As to quaternary structure, heteromultimer composed of small subunits (RfcS) and large subunits (RfcL).

Part of the RFC clamp loader complex which loads the PCNA sliding clamp onto DNA. The chain is Replication factor C large subunit from Methanosphaera stadtmanae (strain ATCC 43021 / DSM 3091 / JCM 11832 / MCB-3).